The sequence spans 267 residues: Glucosamine-6-phosphate deaminase (267 aa).

Asp-76 serves as the catalytic Proton acceptor; for enolization step. The active-site For ring-opening step is the Asp-145. Catalysis depends on His-147, which acts as the Proton acceptor; for ring-opening step. Glu-152 (for ring-opening step) is an active-site residue.

This sequence belongs to the glucosamine/galactosamine-6-phosphate isomerase family. In terms of assembly, homohexamer.

The protein resides in the cytoplasm. It carries out the reaction alpha-D-glucosamine 6-phosphate + H2O = beta-D-fructose 6-phosphate + NH4(+). It participates in nucleotide-sugar biosynthesis; UDP-N-acetyl-alpha-D-glucosamine biosynthesis; alpha-D-glucosamine 6-phosphate from D-fructose 6-phosphate: step 1/1. Functionally, catalyzes the reversible conversion of alpha-D-glucosamine 6-phosphate (GlcN-6P) into beta-D-fructose 6-phosphate (Fru-6P) and ammonium ion, a regulatory reaction step in de novo uridine diphosphate-N-acetyl-alpha-D-glucosamine (UDP-GlcNAc) biosynthesis via hexosamine pathway. This Dictyostelium discoideum (Social amoeba) protein is Glucosamine-6-phosphate deaminase.